The chain runs to 114 residues: Large ribosomal subunit protein bL20 (114 aa).

The protein belongs to the bacterial ribosomal protein bL20 family.

Binds directly to 23S ribosomal RNA and is necessary for the in vitro assembly process of the 50S ribosomal subunit. It is not involved in the protein synthesizing functions of that subunit. The polypeptide is Large ribosomal subunit protein bL20 (Anaeromyxobacter dehalogenans (strain 2CP-C)).